A 337-amino-acid chain; its full sequence is Major outer membrane protein P.IB (337 aa).

An N-terminal signal peptide occupies residues 1-19 (MKKSLIALTLAALPVAAMA).

Belongs to the Gram-negative porin family. As to quaternary structure, homotrimer.

It localises to the cell outer membrane. Its function is as follows. Serves as a slightly cation selective porin. The protein is Major outer membrane protein P.IB (por) of Neisseria lactamica.